Reading from the N-terminus, the 134-residue chain is Small ribosomal subunit protein uS11 (134 aa).

The segment at 1–24 (MATKMAGVKRAGRKRKERKNIERG) is disordered.

This sequence belongs to the universal ribosomal protein uS11 family. In terms of assembly, part of the 30S ribosomal subunit. Interacts with proteins S7 and S18. Binds to IF-3.

Its function is as follows. Located on the platform of the 30S subunit, it bridges several disparate RNA helices of the 16S rRNA. Forms part of the Shine-Dalgarno cleft in the 70S ribosome. This is Small ribosomal subunit protein uS11 from Acetivibrio thermocellus (strain ATCC 27405 / DSM 1237 / JCM 9322 / NBRC 103400 / NCIMB 10682 / NRRL B-4536 / VPI 7372) (Clostridium thermocellum).